The following is a 361-amino-acid chain: Peptide chain release factor 1 (361 aa).

Q237 carries the post-translational modification N5-methylglutamine. Over residues 287-297 (KQQKEQSDTRK) the composition is skewed to basic and acidic residues. The segment at 287-313 (KQQKEQSDTRKSLVGSGDRSERIRTYN) is disordered.

It belongs to the prokaryotic/mitochondrial release factor family. In terms of processing, methylated by PrmC. Methylation increases the termination efficiency of RF1.

The protein resides in the cytoplasm. Peptide chain release factor 1 directs the termination of translation in response to the peptide chain termination codons UAG and UAA. This is Peptide chain release factor 1 from Francisella tularensis subsp. novicida (strain U112).